The primary structure comprises 158 residues: NADH-quinone oxidoreductase subunit B (158 aa).

The [4Fe-4S] cluster site is built by C36, C37, C101, and C131.

This sequence belongs to the complex I 20 kDa subunit family. As to quaternary structure, NDH-1 is composed of 14 different subunits. Subunits NuoB, C, D, E, F, and G constitute the peripheral sector of the complex. [4Fe-4S] cluster is required as a cofactor.

The protein localises to the cell inner membrane. The catalysed reaction is a quinone + NADH + 5 H(+)(in) = a quinol + NAD(+) + 4 H(+)(out). NDH-1 shuttles electrons from NADH, via FMN and iron-sulfur (Fe-S) centers, to quinones in the respiratory chain. The immediate electron acceptor for the enzyme in this species is believed to be ubiquinone. Couples the redox reaction to proton translocation (for every two electrons transferred, four hydrogen ions are translocated across the cytoplasmic membrane), and thus conserves the redox energy in a proton gradient. This is NADH-quinone oxidoreductase subunit B from Francisella tularensis subsp. tularensis (strain FSC 198).